A 281-amino-acid polypeptide reads, in one-letter code: 2-dehydro-3-deoxyphosphooctonate aldolase (281 aa).

Belongs to the KdsA family.

Its subcellular location is the cytoplasm. The enzyme catalyses D-arabinose 5-phosphate + phosphoenolpyruvate + H2O = 3-deoxy-alpha-D-manno-2-octulosonate-8-phosphate + phosphate. It participates in carbohydrate biosynthesis; 3-deoxy-D-manno-octulosonate biosynthesis; 3-deoxy-D-manno-octulosonate from D-ribulose 5-phosphate: step 2/3. Its pathway is bacterial outer membrane biogenesis; lipopolysaccharide biosynthesis. In Pseudomonas paraeruginosa (strain DSM 24068 / PA7) (Pseudomonas aeruginosa (strain PA7)), this protein is 2-dehydro-3-deoxyphosphooctonate aldolase.